Consider the following 457-residue polypeptide: MGPTRPTPPRTPAVPLFAAVVRPLQAFLRLEAASGIVLLSCAVAALALANSPLSDEYRAFFDTTLGVRVGPLAAEFSLAMLVNDGLMTIFFFVVGMEIKRELAVGELRTLRQALLPLVAALGGMAVPAAIFLAFNAGTPAAAGWGVPMATDIAFCVGVLTLLKARVPHALVVFVTALAIFDDIGGILVIALFYGHGLQLTWLAAAGGLTAALALMSRSYVRSLAAYALVTAALWYALHHGGIHATIAGVIAGLAIPARARVSPRAVLRGVADHTAELLRAAEDEDLDSAAVLELEERIEDVESPLGRFVHALHPWVAFAIMPVFALANSGVDLRALEPAQLVGRLAVGTALALFAGKLVGIFCCTWIAVRSGLAPMPGGASAAKLIGVSAVAGIGFTVALFIAGLAYGGGTQLLDEAKVGILAGSLVSGVVGALVLRLTPRVSSRSPAPELSVASAS.

The next 11 helical transmembrane spans lie at 33–53 (ASGIVLLSCAVAALALANSPL), 76–96 (FSLAMLVNDGLMTIFFFVVGM), 114–134 (LLPLVAALGGMAVPAAIFLAF), 142–162 (AGWGVPMATDIAFCVGVLTLL), 172–192 (VFVTALAIFDDIGGILVIALF), 196–216 (GLQLTWLAAAGGLTAALALMS), 235–255 (YALHHGGIHATIAGVIAGLAI), 308–328 (FVHALHPWVAFAIMPVFALAN), 349–369 (TALALFAGKLVGIFCCTWIAV), 385–405 (LIGVSAVAGIGFTVALFIAGL), and 419–439 (VGILAGSLVSGVVGALVLRLT).

The protein belongs to the NhaA Na(+)/H(+) (TC 2.A.33) antiporter family.

The protein resides in the cell inner membrane. It carries out the reaction Na(+)(in) + 2 H(+)(out) = Na(+)(out) + 2 H(+)(in). In terms of biological role, na(+)/H(+) antiporter that extrudes sodium in exchange for external protons. The sequence is that of Na(+)/H(+) antiporter NhaA from Anaeromyxobacter sp. (strain Fw109-5).